A 559-amino-acid chain; its full sequence is Frizzled-1 (559 aa).

Positions 1–35 are cleaved as a signal peptide; sequence MKHSHLLQRCSAQLCTRGSSLILSLLLSVCLSVEG. Topologically, residues 36-239 are extracellular; it reads QYNGEKGISI…FAPEELNFAR (204 aa). The FZ domain maps to 46–165; the sequence is PDHGYCQPIS…NGAGELCVGQ (120 aa). Cystine bridges form between Cys-51–Cys-112, Cys-59–Cys-105, Cys-96–Cys-133, Cys-122–Cys-162, and Cys-126–Cys-150. N-linked (GlcNAc...) asparagine glycosylation is present at Asn-65. Residue Asn-166 is glycosylated (N-linked (GlcNAc...) asparagine). The helical transmembrane segment at 240–260 threads the bilayer; the sequence is IWIGIWSVLCCASTLFTVLTY. Residues 261 to 273 are Cytoplasmic-facing; the sequence is LVDMKRFSYPERP. Residues 274–294 traverse the membrane as a helical segment; that stretch reads IIFLSGCYTMVAIAYIAGFLL. At 295–321 the chain is on the extracellular side; sequence EDKVVCNERFAEDGYKTVAQGTKKEGC. A helical membrane pass occupies residues 322–342; sequence TFLFMMLYFFSMASSIWWVIL. Residues 343-364 are Cytoplasmic-facing; the sequence is SLTWFLAAGMKWGHEAIEANSQ. A helical transmembrane segment spans residues 365–385; sequence YFHLAAWAVPAIKTITILAVG. At 386–408 the chain is on the extracellular side; the sequence is QVDGDTLSGVCFVGINNVDALRG. The chain crosses the membrane as a helical span at residues 409–429; the sequence is FVLAPLFVYLFIGTSFLLAGF. At 430–455 the chain is on the cytoplasmic side; the sequence is VSLFRIRTIMKHDGTKTEKLEKLMVR. Residues 456–476 traverse the membrane as a helical segment; the sequence is IGIFSVLYTVPATIVIACYFY. The Extracellular segment spans residues 477 to 513; that stretch reads EQAFREQWEKSWISQSCKTYAIPCPSTGHPPMSPDFT. The chain crosses the membrane as a helical span at residues 514–534; it reads VFMIKYLMTLIVGITSGFWIW. Topologically, residues 535–559 are cytoplasmic; it reads SGKTLNSWRKFYTRLTNSKQGETTV. Residues 537–542 carry the Lys-Thr-X-X-X-Trp motif, mediates interaction with the PDZ domain of Dvl family members motif; it reads KTLNSW. Residues 557–559 carry the PDZ-binding motif; sequence TTV.

The protein belongs to the G-protein coupled receptor Fz/Smo family. As to quaternary structure, interacts with wnt8. In terms of tissue distribution, in the embryo, expressed in the heart, pronephros and otic vesicles.

It is found in the cell membrane. Receptor for Wnt proteins. Functions in the canonical Wnt/beta-catenin signaling pathway. The canonical Wnt/beta-catenin signaling pathway leads to the activation of disheveled proteins, inhibition of GSK-3 kinase, nuclear accumulation of beta-catenin and activation of Wnt target genes. A second signaling pathway involving PKC and calcium fluxes has been seen for some family members, but it is not yet clear if it represents a distinct pathway or if it can be integrated in the canonical pathway, as PKC seems to be required for Wnt-mediated inactivation of GSK-3 kinase. Both pathways seem to involve interactions with G-proteins. May be involved in transduction and intercellular transmission of polarity information during tissue morphogenesis and/or in differentiated tissues. This chain is Frizzled-1 (fzd1), found in Xenopus laevis (African clawed frog).